We begin with the raw amino-acid sequence, 289 residues long: UPF0761 membrane protein ESA_04062 (289 aa).

A run of 6 helical transmembrane segments spans residues 44 to 64 (LLSL…FPMF), 104 to 124 (VGAL…DSAL), 140 to 160 (FAVY…SLVI), 183 to 203 (IFPL…VPTT), 215 to 235 (LVAA…ITMF), and 244 to 264 (VLAV…IVLL).

The protein belongs to the UPF0761 family.

It localises to the cell inner membrane. The chain is UPF0761 membrane protein ESA_04062 from Cronobacter sakazakii (strain ATCC BAA-894) (Enterobacter sakazakii).